The following is a 125-amino-acid chain: Fluoride-specific ion channel FluC (125 aa).

A run of 4 helical transmembrane segments spans residues 1–21 (MIQAFLVALGGAIGSVLRYYV), 32–52 (AFPWGTLAVNVVGCFVIGVFA), 68–88 (LLITGFLGGFTTFSAFSLDAI), and 101–121 (IYIAASVGLSMAAVISGLAVM). Residues Gly-75 and Thr-78 each coordinate Na(+).

This sequence belongs to the fluoride channel Fluc/FEX (TC 1.A.43) family.

Its subcellular location is the cell inner membrane. It carries out the reaction fluoride(in) = fluoride(out). Its activity is regulated as follows. Na(+) is not transported, but it plays an essential structural role and its presence is essential for fluoride channel function. Its function is as follows. Fluoride-specific ion channel. Important for reducing fluoride concentration in the cell, thus reducing its toxicity. In Rhizobium etli (strain CIAT 652), this protein is Fluoride-specific ion channel FluC.